We begin with the raw amino-acid sequence, 174 residues long: Shikimate kinase 2 (174 aa).

Residue 12 to 17 (GCGKTT) participates in ATP binding. The Mg(2+) site is built by Thr16 and Asp32. Substrate is bound by residues Asp34, Arg58, and Gly79. The LID domain stretch occupies residues 112-126 (QAAPEEDLRPTLTGK). Arg120 is a binding site for ATP. A substrate-binding site is contributed by Arg139.

This sequence belongs to the shikimate kinase family. AroL subfamily. In terms of assembly, monomer. Requires Mg(2+) as cofactor.

The protein resides in the cytoplasm. The enzyme catalyses shikimate + ATP = 3-phosphoshikimate + ADP + H(+). It participates in metabolic intermediate biosynthesis; chorismate biosynthesis; chorismate from D-erythrose 4-phosphate and phosphoenolpyruvate: step 5/7. Functionally, catalyzes the specific phosphorylation of the 3-hydroxyl group of shikimic acid using ATP as a cosubstrate. The polypeptide is Shikimate kinase 2 (Escherichia coli O81 (strain ED1a)).